Consider the following 263-residue polypeptide: Small ribosomal subunit protein uS2 (263 aa).

Belongs to the universal ribosomal protein uS2 family.

The polypeptide is Small ribosomal subunit protein uS2 (Roseiflexus castenholzii (strain DSM 13941 / HLO8)).